Consider the following 552-residue polypeptide: CTP synthase (552 aa).

The segment at 1–270 (MTKFVFVTGG…DGLICDKLRL (270 aa)) is amidoligase domain. CTP is bound at residue S13. S13 contacts UTP. ATP-binding positions include 14–19 (SLGKGI) and D71. Residues D71 and E144 each coordinate Mg(2+). Residues 151–153 (DIE), 191–196 (KTKPTQ), and K227 each bind CTP. UTP-binding positions include 191–196 (KTKPTQ) and K227. Positions 295–548 (QIAMVGKYVE…IKAAVEHQKP (254 aa)) constitute a Glutamine amidotransferase type-1 domain. G357 is an L-glutamine binding site. Catalysis depends on C384, which acts as the Nucleophile; for glutamine hydrolysis. L-glutamine contacts are provided by residues 385 to 388 (LGMQ) and E408. The segment at 432 to 451 (KTRSENSDLGGTMRLGAQSS) is disordered. Residue R474 coordinates L-glutamine. Catalysis depends on residues H521 and E523.

The protein belongs to the CTP synthase family. As to quaternary structure, homotetramer.

It catalyses the reaction UTP + L-glutamine + ATP + H2O = CTP + L-glutamate + ADP + phosphate + 2 H(+). It carries out the reaction L-glutamine + H2O = L-glutamate + NH4(+). The catalysed reaction is UTP + NH4(+) + ATP = CTP + ADP + phosphate + 2 H(+). It participates in pyrimidine metabolism; CTP biosynthesis via de novo pathway; CTP from UDP: step 2/2. Its activity is regulated as follows. Allosterically activated by GTP, when glutamine is the substrate; GTP has no effect on the reaction when ammonia is the substrate. The allosteric effector GTP functions by stabilizing the protein conformation that binds the tetrahedral intermediate(s) formed during glutamine hydrolysis. Inhibited by the product CTP, via allosteric rather than competitive inhibition. Catalyzes the ATP-dependent amination of UTP to CTP with either L-glutamine or ammonia as the source of nitrogen. Regulates intracellular CTP levels through interactions with the four ribonucleotide triphosphates. This chain is CTP synthase, found in Acidovorax sp. (strain JS42).